The primary structure comprises 211 residues: Molybdenum cofactor guanylyltransferase (211 aa).

GTP-binding positions include 12-14 (LAG), Lys-25, Asn-53, Asp-71, and Asp-101. Position 101 (Asp-101) interacts with Mg(2+).

This sequence belongs to the MobA family. As to quaternary structure, monomer. Mg(2+) is required as a cofactor.

It localises to the cytoplasm. It carries out the reaction Mo-molybdopterin + GTP + H(+) = Mo-molybdopterin guanine dinucleotide + diphosphate. In terms of biological role, transfers a GMP moiety from GTP to Mo-molybdopterin (Mo-MPT) cofactor (Moco or molybdenum cofactor) to form Mo-molybdopterin guanine dinucleotide (Mo-MGD) cofactor. This is Molybdenum cofactor guanylyltransferase from Acidovorax ebreus (strain TPSY) (Diaphorobacter sp. (strain TPSY)).